Reading from the N-terminus, the 943-residue chain is Nuclear receptor coactivator 7 (943 aa).

Met1 bears the N-acetylmethionine mark. A compositionally biased stretch (basic and acidic residues) spans 1–15; sequence MDTKEEKKEQKERKQ. Positions 1-32 form a coiled coil; that stretch reads MDTKEEKKEQKERKQSYFARLKKKKQAKQNAE. Positions 1–83 are disordered; that stretch reads MDTKEEKKEQ…RKSNQLKEIR (83 aa). A Phosphoserine modification is found at Ser92. The region spanning 117–160 is the LysM domain; sequence MEYTAGSQDTLNSVALKFNVTPNKLVELNKLFTHTIVPGQVLFV. Residue Thr137 is modified to Phosphothreonine. Residues 169-189 are disordered; that stretch reads TIQLSSSTPGATVSPSSSDAE. Positions 177–187 are enriched in polar residues; it reads PGATVSPSSSD. A phosphoserine mark is found at Ser182, Ser186, Ser211, Ser212, and Ser214. The tract at residues 334–369 is disordered; that stretch reads EKRQQNGERTLALDAKSVRSPEESTERTCTRIEPPD. Basic and acidic residues predominate over residues 349 to 369; sequence KSVRSPEESTERTCTRIEPPD. Ser442, Ser498, and Ser500 each carry phosphoserine. The span at 486-499 shows a compositional bias: basic and acidic residues; it reads EKQDEAPEVDKHSG. Disordered regions lie at residues 486–507 and 543–576; these read EKQD…LGES and LSDR…NKEP. The region spanning 782–943 is the TLDc domain; that stretch reads ALLENMHIEQ…VQDLEVWTFE (162 aa).

The protein belongs to the OXR1 family. In terms of assembly, interacts with ESR1, ESR2A, ESR2B, THRB, PPARG and RARA in a ligand-inducible manner. Interacts with the heterodimer AHR-ARNT. As to expression, highly expressed in brain and kidney. Weakly expressed in mammary gland, lung and testis. In brain, expression is found in neurons of cerebral cortex, thalamus, hypothalamus, hippocampus, cerebellum, striatum and choroid plexus.

The protein resides in the nucleus. Functionally, enhances the transcriptional activities of several nuclear receptors. Involved in the coactivation of different nuclear receptors, such as ESR1, THRB, PPARG and RARA. This is Nuclear receptor coactivator 7 (Ncoa7) from Mus musculus (Mouse).